Consider the following 72-residue polypeptide: Lantibiotic Flvbeta.g (72 aa).

The propeptide at 1–34 (MNNNNFDMEKFKKLAAIVSEGEIDEMLDETTVGA) is cleaved by FlvT. A cross-link (lanthionine (Ser-Cys); by FlvM2) is located at residues 36–40 (STLPC). 3 positions are modified to 2,3-didehydrobutyrine; by FlvM2: Thr37, Thr46, and Thr48. 3 consecutive cross-links (beta-methyllanthionine (Thr-Cys); by FlvM2) follow at residues 55-61 (TTGFDWC), 63-66 (TGAC), and 67-70 (THSC).

Contains LL-lanthionine and DL-beta-methyllanthionine, when coepressed in E.coli with the flavecin synthetase FlvM2.

The protein resides in the secreted. Its function is as follows. Lanthionine-containing peptide antibiotic (lantibiotic) that is probably weakly active on Gram-positive bacteria, since its analog [Del1]Flvbeta.g shows weak antibacterial activity against M.luteus. This activity is synergistically enhanced by [Del2]Flvalpha.a, an analog of Flvalpha.a, which is encoded by the same operon than Flvbeta.g. The bactericidal activity of lantibiotics is based on depolarization of energized bacterial cytoplasmic membranes, initiated by the formation of aqueous transmembrane pores. The sequence is that of Lantibiotic Flvbeta.g from Ruminococcus flavefaciens.